Here is a 289-residue protein sequence, read N- to C-terminus: 4-diphosphocytidyl-2-C-methyl-D-erythritol kinase (289 aa).

Lysine 10 is a catalytic residue. ATP is bound at residue proline 99–serine 109. Aspartate 141 is an active-site residue.

The protein belongs to the GHMP kinase family. IspE subfamily. In terms of assembly, homodimer.

It carries out the reaction 4-CDP-2-C-methyl-D-erythritol + ATP = 4-CDP-2-C-methyl-D-erythritol 2-phosphate + ADP + H(+). Its pathway is isoprenoid biosynthesis; isopentenyl diphosphate biosynthesis via DXP pathway; isopentenyl diphosphate from 1-deoxy-D-xylulose 5-phosphate: step 3/6. In terms of biological role, catalyzes the phosphorylation of the position 2 hydroxy group of 4-diphosphocytidyl-2C-methyl-D-erythritol. The sequence is that of 4-diphosphocytidyl-2-C-methyl-D-erythritol kinase from Enterobacter sp. (strain 638).